The following is a 652-amino-acid chain: Putative glycine--tRNA ligase (652 aa).

Positions 119–145 (GDKEARGQNSNDQPEESDDKKKRKKKV) are disordered. Glu-221 is a glycine binding site. ATP-binding positions include 253 to 255 (RNE) and 264 to 265 (RV). Glu-272 contributes to the glycine binding site. 380-381 (EC) contributes to the ATP binding site. 499–501 (EPS) is a glycine binding site. Arg-506 contacts ATP.

The protein belongs to the class-II aminoacyl-tRNA synthetase family. As to quaternary structure, homodimer.

It localises to the cytoplasm. It carries out the reaction tRNA(Gly) + glycine + ATP = glycyl-tRNA(Gly) + AMP + diphosphate. The enzyme catalyses 2 ATP + H(+) = P(1),P(4)-bis(5'-adenosyl) tetraphosphate + diphosphate. Its function is as follows. Catalyzes the ATP-dependent ligation of glycine to the 3'-end of its cognate tRNA, via the formation of an aminoacyl-adenylate intermediate (Gly-AMP). Also produces diadenosine tetraphosphate (Ap4A), a universal pleiotropic signaling molecule needed for cell regulation pathways, by direct condensation of 2 ATPs. Thereby, may play a special role in Ap4A homeostasis. In Schizosaccharomyces pombe (strain 972 / ATCC 24843) (Fission yeast), this protein is Putative glycine--tRNA ligase (grs1).